We begin with the raw amino-acid sequence, 163 residues long: Crossover junction endodeoxyribonuclease RuvC (163 aa).

Active-site residues include Asp-9, Glu-76, and Asp-148. Mg(2+) contacts are provided by Asp-9, Glu-76, and Asp-148.

It belongs to the RuvC family. Homodimer which binds Holliday junction (HJ) DNA. The HJ becomes 2-fold symmetrical on binding to RuvC with unstacked arms; it has a different conformation from HJ DNA in complex with RuvA. In the full resolvosome a probable DNA-RuvA(4)-RuvB(12)-RuvC(2) complex forms which resolves the HJ. Mg(2+) is required as a cofactor.

The protein localises to the cytoplasm. The catalysed reaction is Endonucleolytic cleavage at a junction such as a reciprocal single-stranded crossover between two homologous DNA duplexes (Holliday junction).. Functionally, the RuvA-RuvB-RuvC complex processes Holliday junction (HJ) DNA during genetic recombination and DNA repair. Endonuclease that resolves HJ intermediates. Cleaves cruciform DNA by making single-stranded nicks across the HJ at symmetrical positions within the homologous arms, yielding a 5'-phosphate and a 3'-hydroxyl group; requires a central core of homology in the junction. The consensus cleavage sequence is 5'-(A/T)TT(C/G)-3'. Cleavage occurs on the 3'-side of the TT dinucleotide at the point of strand exchange. HJ branch migration catalyzed by RuvA-RuvB allows RuvC to scan DNA until it finds its consensus sequence, where it cleaves and resolves the cruciform DNA. The protein is Crossover junction endodeoxyribonuclease RuvC of Trichodesmium erythraeum (strain IMS101).